The following is a 208-amino-acid chain: CASP-like protein 2A1 (208 aa).

The Cytoplasmic portion of the chain corresponds to 1–36 (MSKMAEQKAAAVDGLGGAGAADAAPAGEAAAARVRP). The helical transmembrane segment at 37 to 57 (VETLLRAAPLGLCVAAMTVML) threads the bilayer. The Extracellular portion of the chain corresponds to 58 to 78 (RDQQSNEYGTVAYSDLGGFKY). Residues 79–99 (LVYANGLCAAYSLVSAFYTAV) traverse the membrane as a helical segment. Topologically, residues 100–108 (PRPATVSRS) are cytoplasmic. A helical membrane pass occupies residues 109-129 (WVVFLLDQVFTYLILAAGAAA). Residues 130–161 (AELLYLAYNGDKEVTWSEACGVFGSFCRQART) are Extracellular-facing. Residues 162-182 (SVAITFGTVLCFILLSLISSY) traverse the membrane as a helical segment. At 183–208 (RLFSAYEAPPSSALGSKGVEIAAYPR) the chain is on the cytoplasmic side.

It belongs to the Casparian strip membrane proteins (CASP) family. In terms of assembly, homodimer and heterodimers.

It is found in the cell membrane. The sequence is that of CASP-like protein 2A1 from Sorghum bicolor (Sorghum).